The chain runs to 318 residues: Aspartate carbamoyltransferase catalytic subunit (318 aa).

Residues arginine 55 and threonine 56 each coordinate carbamoyl phosphate. Lysine 83 serves as a coordination point for L-aspartate. Arginine 105, histidine 138, and glutamine 141 together coordinate carbamoyl phosphate. Arginine 171 and arginine 225 together coordinate L-aspartate. Glycine 266 and proline 267 together coordinate carbamoyl phosphate.

It belongs to the aspartate/ornithine carbamoyltransferase superfamily. ATCase family. Heterododecamer (2C3:3R2) of six catalytic PyrB chains organized as two trimers (C3), and six regulatory PyrI chains organized as three dimers (R2).

The catalysed reaction is carbamoyl phosphate + L-aspartate = N-carbamoyl-L-aspartate + phosphate + H(+). The protein operates within pyrimidine metabolism; UMP biosynthesis via de novo pathway; (S)-dihydroorotate from bicarbonate: step 2/3. Its function is as follows. Catalyzes the condensation of carbamoyl phosphate and aspartate to form carbamoyl aspartate and inorganic phosphate, the committed step in the de novo pyrimidine nucleotide biosynthesis pathway. The sequence is that of Aspartate carbamoyltransferase catalytic subunit from Corynebacterium kroppenstedtii (strain DSM 44385 / JCM 11950 / CIP 105744 / CCUG 35717).